Consider the following 1073-residue polypeptide: Transmembrane protein 132E (1073 aa).

The signal sequence occupies residues 1 to 33; sequence MGHFVVQGDLPWILCSLRLVIMIIAGKVSPTSS. The Extracellular segment spans residues 34-899; it reads DALFSVPVPS…MTDLEIGMYA (866 aa). Asn102 carries N-linked (GlcNAc...) asparagine glycosylation. A disordered region spans residues 246–270; the sequence is DPDSNDECGESYPRRGGPSRGESLS. N-linked (GlcNAc...) asparagine glycans are attached at residues Asn324, Asn396, and Asn746. Residues 900–920 form a helical membrane-spanning segment; that stretch reads LLGVFCLAILVFLINCIVFVL. Residues 921–1073 lie on the Cytoplasmic side of the membrane; it reads KYRHKRIPPE…DYMRRIKEIA (153 aa). A compositionally biased stretch (polar residues) spans 952–970; sequence TQSDLSPQTVESPSNTLEG. The segment at 952–1024 is disordered; that stretch reads TQSDLSPQTV…PTSKRKRVKF (73 aa). Over residues 982-994 the composition is skewed to low complexity; sequence SGSSQTSVQSQVH.

It belongs to the TMEM132 family.

Its subcellular location is the membrane. In terms of biological role, required for normal inner ear hair cell function and hearing. This chain is Transmembrane protein 132E (tmem132e), found in Danio rerio (Zebrafish).